Here is a 146-residue protein sequence, read N- to C-terminus: Leghemoglobin 1 (146 aa).

One can recognise a Globin domain in the interval 2–146; it reads GFTEKQEALV…LAAAIKKAMG (145 aa). Y29 bears the Nitrated tyrosine mark. S44 provides a ligand contact to heme b. Phosphoserine is present on S44. H61 contributes to the O2 binding site. 3 residues coordinate heme b: K64, H93, and K96. Nitrated tyrosine is present on Y134.

This sequence belongs to the plant globin family. In terms of assembly, monomer. In terms of processing, nitrated in effective nodules and particularly in hypoxic conditions; this mechanism may play a protective role in the symbiosis by buffering toxic peroxynitrite NO(2)(-). Nitration level decrease during nodule senescence. Phosphorylation at Ser-44 disrupts the molecular environment of its porphyrin ring oxygen binding pocket, thus leading to a reduced oxygen consumption and to the delivery of oxygen O(2) to symbiosomes. In terms of tissue distribution, root nodules.

It localises to the cytoplasm. It is found in the cytosol. The protein localises to the nucleus. In terms of biological role, leghemoglobin that reversibly binds oxygen O(2) through a pentacoordinated heme iron. In root nodules, facilitates the diffusion of oxygen to the bacteroids while preventing the bacterial nitrogenase from being inactivated by buffering dioxygen, nitric oxide and carbon monoxide, and promoting the formation of reactive oxygen species (ROS, e.g. H(2)O(2)). This role is essential for symbiotic nitrogen fixation (SNF). This is Leghemoglobin 1 from Medicago truncatula (Barrel medic).